The primary structure comprises 337 residues: Phenylalanine--tRNA ligase alpha subunit (337 aa).

Glu252 lines the Mg(2+) pocket.

It belongs to the class-II aminoacyl-tRNA synthetase family. Phe-tRNA synthetase alpha subunit type 1 subfamily. In terms of assembly, tetramer of two alpha and two beta subunits. Mg(2+) serves as cofactor.

Its subcellular location is the cytoplasm. The catalysed reaction is tRNA(Phe) + L-phenylalanine + ATP = L-phenylalanyl-tRNA(Phe) + AMP + diphosphate + H(+). This chain is Phenylalanine--tRNA ligase alpha subunit, found in Saccharophagus degradans (strain 2-40 / ATCC 43961 / DSM 17024).